The following is a 117-amino-acid chain: Large ribosomal subunit protein eL18 (117 aa).

It belongs to the eukaryotic ribosomal protein eL18 family.

The chain is Large ribosomal subunit protein eL18 from Archaeoglobus fulgidus (strain ATCC 49558 / DSM 4304 / JCM 9628 / NBRC 100126 / VC-16).